We begin with the raw amino-acid sequence, 319 residues long: MamJ paralog LimJ (319 aa).

2 disordered regions span residues 1–59 (MMME…PAPV) and 145–176 (AAAP…TETE). A compositionally biased stretch (low complexity) spans 30 to 52 (AALAPAADAEIPASSAPEPAAPI). The segment covering 150–164 (PEPEPVPEPEPEPEP) has biased composition (acidic residues).

This sequence belongs to the magnetosome MamJ protein family.

It is found in the magnetosome. In terms of biological role, regulates the dynamic behavior of MamK filaments; paralog MamJ also promotes MamK turnover. At least one other protein besides MamJ and LimJ is required for MamK turnover. Might connect magnetosomes to MamK filaments. This Paramagnetospirillum magneticum (strain ATCC 700264 / AMB-1) (Magnetospirillum magneticum) protein is MamJ paralog LimJ.